The sequence spans 349 residues: Isopentenyl-diphosphate delta-isomerase (349 aa).

Residue 6–7 (RK) participates in substrate binding. FMN is bound by residues 62–64 (AMT), Ser-93, and Asn-122. Gln-152 is a binding site for substrate. Mg(2+) is bound at residue Glu-153. Residues Lys-184, Thr-214, 258-259 (GG), and 280-281 (AG) contribute to the FMN site.

This sequence belongs to the IPP isomerase type 2 family. In terms of assembly, homooctamer. Dimer of tetramers. Requires FMN as cofactor. NADPH is required as a cofactor. It depends on Mg(2+) as a cofactor.

Its subcellular location is the cytoplasm. The catalysed reaction is isopentenyl diphosphate = dimethylallyl diphosphate. In terms of biological role, involved in the biosynthesis of isoprenoids. Catalyzes the 1,3-allylic rearrangement of the homoallylic substrate isopentenyl (IPP) to its allylic isomer, dimethylallyl diphosphate (DMAPP). This Bacillus licheniformis (strain ATCC 14580 / DSM 13 / JCM 2505 / CCUG 7422 / NBRC 12200 / NCIMB 9375 / NCTC 10341 / NRRL NRS-1264 / Gibson 46) protein is Isopentenyl-diphosphate delta-isomerase.